Reading from the N-terminus, the 130-residue chain is Ribosome-binding factor A (130 aa).

This sequence belongs to the RbfA family. As to quaternary structure, monomer. Binds 30S ribosomal subunits, but not 50S ribosomal subunits or 70S ribosomes.

It is found in the cytoplasm. Functionally, one of several proteins that assist in the late maturation steps of the functional core of the 30S ribosomal subunit. Associates with free 30S ribosomal subunits (but not with 30S subunits that are part of 70S ribosomes or polysomes). Required for efficient processing of 16S rRNA. May interact with the 5'-terminal helix region of 16S rRNA. The polypeptide is Ribosome-binding factor A (Prochlorococcus marinus (strain MIT 9312)).